A 287-amino-acid chain; its full sequence is Probable endoribonuclease YicC (287 aa).

This sequence belongs to the YicC/YloC family. The cofactor is a divalent metal cation.

Its function is as follows. Probably a ssRNA endonuclease. Functionally, might contribute to small RNA (sRNA) regulation. This chain is Probable endoribonuclease YicC, found in Salmonella typhimurium (strain LT2 / SGSC1412 / ATCC 700720).